Here is a 173-residue protein sequence, read N- to C-terminus: Protein tyrosine phosphatase type IVA 1 (173 aa).

The Tyrosine-protein phosphatase domain occupies 8 to 161 (APVEVTYKNM…YRPKMRLRFK (154 aa)). A disulfide bridge links Cys49 with Cys104. Asp72 serves as the catalytic Proton donor. Positions 97-132 (GCCIAVHCVAGLGRAPVLVALALIEGGMKYEDAVQF) are interaction with ATF5. Cys104 (phosphocysteine intermediate) is an active-site residue. 105-110 (VAGLGR) lines the phosphate pocket. Position 110 (Arg110) interacts with substrate. Cysteine methyl ester is present on Cys170. Cys170 carries the S-farnesyl cysteine lipid modification. Residues 171–173 (CIQ) constitute a propeptide, removed in mature form.

The protein belongs to the protein-tyrosine phosphatase family. In terms of assembly, homotrimer. Interacts with ATF5. Interacts with tubulin. Farnesylated. Farnesylation is required for membrane targeting. Unfarnesylated forms are shifted into the nucleus. Expressed in bone marrow, lymph nodes, T lymphocytes, spleen, thymus and tonsil. Overexpressed in tumor cell lines.

The protein localises to the cell membrane. Its subcellular location is the early endosome. The protein resides in the endoplasmic reticulum. It is found in the cytoplasm. It localises to the cytoskeleton. The protein localises to the spindle. Its subcellular location is the nucleus. It catalyses the reaction O-phospho-L-tyrosyl-[protein] + H2O = L-tyrosyl-[protein] + phosphate. Inhibited by sodium orthovanadate and pentamidine. Its function is as follows. Protein tyrosine phosphatase which stimulates progression from G1 into S phase during mitosis. May play a role in the development and maintenance of differentiating epithelial tissues. Enhances cell proliferation, cell motility and invasive activity, and promotes cancer metastasis. The protein is Protein tyrosine phosphatase type IVA 1 (PTP4A1) of Homo sapiens (Human).